The sequence spans 162 residues: Cyclic pyranopterin monophosphate synthase (162 aa).

Substrate-binding positions include 75-77 and 113-114; these read LCH and ME. Asp128 is an active-site residue.

It belongs to the MoaC family. In terms of assembly, homohexamer; trimer of dimers.

The enzyme catalyses (8S)-3',8-cyclo-7,8-dihydroguanosine 5'-triphosphate = cyclic pyranopterin phosphate + diphosphate. It participates in cofactor biosynthesis; molybdopterin biosynthesis. Its function is as follows. Catalyzes the conversion of (8S)-3',8-cyclo-7,8-dihydroguanosine 5'-triphosphate to cyclic pyranopterin monophosphate (cPMP). In Burkholderia vietnamiensis (strain G4 / LMG 22486) (Burkholderia cepacia (strain R1808)), this protein is Cyclic pyranopterin monophosphate synthase.